Consider the following 619-residue polypeptide: Dihydroxy-acid dehydratase (619 aa).

Residue aspartate 81 participates in Mg(2+) binding. Cysteine 122 contacts [2Fe-2S] cluster. Mg(2+)-binding residues include aspartate 123 and lysine 124. Residue lysine 124 is modified to N6-carboxylysine. Cysteine 195 provides a ligand contact to [2Fe-2S] cluster. Glutamate 494 is a Mg(2+) binding site. The active-site Proton acceptor is serine 520.

Belongs to the IlvD/Edd family. Homodimer. [2Fe-2S] cluster is required as a cofactor. It depends on Mg(2+) as a cofactor.

The enzyme catalyses (2R)-2,3-dihydroxy-3-methylbutanoate = 3-methyl-2-oxobutanoate + H2O. The catalysed reaction is (2R,3R)-2,3-dihydroxy-3-methylpentanoate = (S)-3-methyl-2-oxopentanoate + H2O. It participates in amino-acid biosynthesis; L-isoleucine biosynthesis; L-isoleucine from 2-oxobutanoate: step 3/4. The protein operates within amino-acid biosynthesis; L-valine biosynthesis; L-valine from pyruvate: step 3/4. In terms of biological role, functions in the biosynthesis of branched-chain amino acids. Catalyzes the dehydration of (2R,3R)-2,3-dihydroxy-3-methylpentanoate (2,3-dihydroxy-3-methylvalerate) into 2-oxo-3-methylpentanoate (2-oxo-3-methylvalerate) and of (2R)-2,3-dihydroxy-3-methylbutanoate (2,3-dihydroxyisovalerate) into 2-oxo-3-methylbutanoate (2-oxoisovalerate), the penultimate precursor to L-isoleucine and L-valine, respectively. The protein is Dihydroxy-acid dehydratase of Shewanella sp. (strain MR-7).